A 279-amino-acid polypeptide reads, in one-letter code: Phosphatidylglycerol--prolipoprotein diacylglyceryl transferase (279 aa).

Transmembrane regions (helical) follow at residues Trp22–Leu42, Leu52–Val72, and Ile89–Ile109. Arg137 lines the a 1,2-diacyl-sn-glycero-3-phospho-(1'-sn-glycerol) pocket. Transmembrane regions (helical) follow at residues Leu203 to Ala223 and Ile235 to Tyr255.

Belongs to the Lgt family.

It localises to the cell membrane. The catalysed reaction is L-cysteinyl-[prolipoprotein] + a 1,2-diacyl-sn-glycero-3-phospho-(1'-sn-glycerol) = an S-1,2-diacyl-sn-glyceryl-L-cysteinyl-[prolipoprotein] + sn-glycerol 1-phosphate + H(+). Its pathway is protein modification; lipoprotein biosynthesis (diacylglyceryl transfer). Functionally, catalyzes the transfer of the diacylglyceryl group from phosphatidylglycerol to the sulfhydryl group of the N-terminal cysteine of a prolipoprotein, the first step in the formation of mature lipoproteins. In Staphylococcus epidermidis (strain ATCC 12228 / FDA PCI 1200), this protein is Phosphatidylglycerol--prolipoprotein diacylglyceryl transferase.